Reading from the N-terminus, the 142-residue chain is Hemoglobin subunit alpha (142 aa).

The Globin domain maps to 2-142; the sequence is VLSPADKTNV…VSTVLTSKYR (141 aa). S4 is subject to Phosphoserine. K8 bears the N6-succinyllysine mark. T9 carries the phosphothreonine modification. At K12 the chain carries N6-succinyllysine. An N6-acetyllysine; alternate modification is found at K17. Residue K17 is modified to N6-succinyllysine; alternate. Y25 is modified (phosphotyrosine). S36 is modified (phosphoserine). The residue at position 41 (K41) is an N6-succinyllysine. S50 is subject to Phosphoserine. Position 59 (H59) interacts with O2. H88 provides a ligand contact to heme b. Position 103 is a phosphoserine (S103). T109 carries the phosphothreonine modification. S125 is subject to Phosphoserine. Phosphothreonine occurs at positions 135 and 138. S139 is subject to Phosphoserine.

It belongs to the globin family. In terms of assembly, heterotetramer of two alpha chains and two beta chains. Red blood cells.

Functionally, involved in oxygen transport from the lung to the various peripheral tissues. In terms of biological role, hemopressin acts as an antagonist peptide of the cannabinoid receptor CNR1. Hemopressin-binding efficiently blocks cannabinoid receptor CNR1 and subsequent signaling. The protein is Hemoglobin subunit alpha (HBA) of Ailuropoda melanoleuca (Giant panda).